We begin with the raw amino-acid sequence, 119 residues long: Large ribosomal subunit protein eL8 (119 aa).

Belongs to the eukaryotic ribosomal protein eL8 family. In terms of assembly, part of the 50S ribosomal subunit. Probably part of the RNase P complex.

It is found in the cytoplasm. Its function is as follows. Multifunctional RNA-binding protein that recognizes the K-turn motif in ribosomal RNA, the RNA component of RNase P, box H/ACA, box C/D and box C'/D' sRNAs. The protein is Large ribosomal subunit protein eL8 of Archaeoglobus fulgidus (strain ATCC 49558 / DSM 4304 / JCM 9628 / NBRC 100126 / VC-16).